The chain runs to 291 residues: N-acetylmannosamine kinase (291 aa).

ATP contacts are provided by residues 5–12 and 132–139; these read AIDIGGTK and GVGGGVVS. Histidine 156, cysteine 166, cysteine 168, and cysteine 173 together coordinate Zn(2+).

It belongs to the ROK (NagC/XylR) family. NanK subfamily. As to quaternary structure, homodimer.

It catalyses the reaction an N-acyl-D-mannosamine + ATP = an N-acyl-D-mannosamine 6-phosphate + ADP + H(+). The protein operates within amino-sugar metabolism; N-acetylneuraminate degradation; D-fructose 6-phosphate from N-acetylneuraminate: step 2/5. Functionally, catalyzes the phosphorylation of N-acetylmannosamine (ManNAc) to ManNAc-6-P. This Escherichia coli O6:H1 (strain CFT073 / ATCC 700928 / UPEC) protein is N-acetylmannosamine kinase (nanK1).